Consider the following 478-residue polypeptide: DNA gyrase subunit B (478 aa).

The Toprim domain occupies 319–438 (CELYLVEGDS…GGHVYIAQPP (120 aa)). Residues E325, D403, and D405 each coordinate Mg(2+).

Belongs to the type II topoisomerase GyrB family. As to quaternary structure, heterotetramer, composed of two GyrA and two GyrB chains. In the heterotetramer, GyrA contains the active site tyrosine that forms a transient covalent intermediate with DNA, while GyrB binds cofactors and catalyzes ATP hydrolysis. The cofactor is Mg(2+). Mn(2+) serves as cofactor. Ca(2+) is required as a cofactor.

It localises to the cytoplasm. The enzyme catalyses ATP-dependent breakage, passage and rejoining of double-stranded DNA.. A type II topoisomerase that negatively supercoils closed circular double-stranded (ds) DNA in an ATP-dependent manner to modulate DNA topology and maintain chromosomes in an underwound state. Negative supercoiling favors strand separation, and DNA replication, transcription, recombination and repair, all of which involve strand separation. Also able to catalyze the interconversion of other topological isomers of dsDNA rings, including catenanes and knotted rings. Type II topoisomerases break and join 2 DNA strands simultaneously in an ATP-dependent manner. This chain is DNA gyrase subunit B (gyrB), found in Cytophaga hutchinsonii.